The primary structure comprises 232 residues: Orotate phosphoribosyltransferase (232 aa).

Residues Arg-107, Lys-108, Lys-111, His-113, and 133-141 (EDLTTAGGS) contribute to the 5-phospho-alpha-D-ribose 1-diphosphate site. Thr-137 serves as a coordination point for orotate.

The protein belongs to the purine/pyrimidine phosphoribosyltransferase family. PyrE subfamily. Homodimer. Mg(2+) is required as a cofactor.

The catalysed reaction is orotidine 5'-phosphate + diphosphate = orotate + 5-phospho-alpha-D-ribose 1-diphosphate. The protein operates within pyrimidine metabolism; UMP biosynthesis via de novo pathway; UMP from orotate: step 1/2. Its function is as follows. Catalyzes the transfer of a ribosyl phosphate group from 5-phosphoribose 1-diphosphate to orotate, leading to the formation of orotidine monophosphate (OMP). This is Orotate phosphoribosyltransferase from Rhizobium meliloti (strain 1021) (Ensifer meliloti).